A 206-amino-acid polypeptide reads, in one-letter code: Large ribosomal subunit protein uL4 (206 aa).

Positions 42-94 (RRQQGSHKAQGRGDVSRTGSKMYKQKGTGRARHHSARAPQFRGGGQAHGPVVR) are disordered. Residues 64–77 (YKQKGTGRARHHSA) show a composition bias toward basic residues.

The protein belongs to the universal ribosomal protein uL4 family. As to quaternary structure, part of the 50S ribosomal subunit.

Functionally, one of the primary rRNA binding proteins, this protein initially binds near the 5'-end of the 23S rRNA. It is important during the early stages of 50S assembly. It makes multiple contacts with different domains of the 23S rRNA in the assembled 50S subunit and ribosome. In terms of biological role, forms part of the polypeptide exit tunnel. This is Large ribosomal subunit protein uL4 from Brucella abortus biovar 1 (strain 9-941).